Consider the following 341-residue polypeptide: Serine/threonine-protein kinase PDIK1L (341 aa).

Residues 8–334 (YDLIREVGRG…LELRLVQIAF (327 aa)) enclose the Protein kinase domain. Residues 14-22 (VGRGSYGVV) and K37 each bind ATP. D164 functions as the Proton acceptor in the catalytic mechanism.

This sequence belongs to the protein kinase superfamily. Ser/Thr protein kinase family.

Its subcellular location is the nucleus. It carries out the reaction L-seryl-[protein] + ATP = O-phospho-L-seryl-[protein] + ADP + H(+). The catalysed reaction is L-threonyl-[protein] + ATP = O-phospho-L-threonyl-[protein] + ADP + H(+). This Mus musculus (Mouse) protein is Serine/threonine-protein kinase PDIK1L (Pdik1l).